A 287-amino-acid polypeptide reads, in one-letter code: Probable endoribonuclease YicC (287 aa).

It belongs to the YicC/YloC family. A divalent metal cation is required as a cofactor.

Probably a ssRNA endonuclease. In terms of biological role, might contribute to small RNA (sRNA) regulation. The protein is Probable endoribonuclease YicC of Haemophilus influenzae (strain ATCC 51907 / DSM 11121 / KW20 / Rd).